The sequence spans 112 residues: Protein FAM32A (112 aa).

The disordered stretch occupies residues 23–56 (TKRKKKKKDKDKAKMLEAMGTSKKSEEEKRRCLD). Positions 45–56 (KKSEEEKRRCLD) are enriched in basic and acidic residues.

Belongs to the FAM32 family. In terms of tissue distribution, widely expressed, with highest level in pancreas and lowest in muscle.

The protein resides in the nucleus. Its function is as follows. May induce G2 arrest and apoptosis. May also increase cell sensitivity to apoptotic stimuli. In cell lines, may play a role in the inhibition of anchor-independent cell growth. The protein is Protein FAM32A (Fam32a) of Mus musculus (Mouse).